The sequence spans 321 residues: Lipoyl synthase (321 aa).

[4Fe-4S] cluster contacts are provided by Cys68, Cys73, Cys79, Cys94, Cys98, Cys101, and Ser308. One can recognise a Radical SAM core domain in the interval 80 to 297 (FNHGTATFMI…KEVALELGFT (218 aa)).

The protein belongs to the radical SAM superfamily. Lipoyl synthase family. [4Fe-4S] cluster is required as a cofactor.

It localises to the cytoplasm. The enzyme catalyses [[Fe-S] cluster scaffold protein carrying a second [4Fe-4S](2+) cluster] + N(6)-octanoyl-L-lysyl-[protein] + 2 oxidized [2Fe-2S]-[ferredoxin] + 2 S-adenosyl-L-methionine + 4 H(+) = [[Fe-S] cluster scaffold protein] + N(6)-[(R)-dihydrolipoyl]-L-lysyl-[protein] + 4 Fe(3+) + 2 hydrogen sulfide + 2 5'-deoxyadenosine + 2 L-methionine + 2 reduced [2Fe-2S]-[ferredoxin]. Its pathway is protein modification; protein lipoylation via endogenous pathway; protein N(6)-(lipoyl)lysine from octanoyl-[acyl-carrier-protein]: step 2/2. Functionally, catalyzes the radical-mediated insertion of two sulfur atoms into the C-6 and C-8 positions of the octanoyl moiety bound to the lipoyl domains of lipoate-dependent enzymes, thereby converting the octanoylated domains into lipoylated derivatives. This is Lipoyl synthase from Vibrio cholerae serotype O1 (strain ATCC 39315 / El Tor Inaba N16961).